Consider the following 382-residue polypeptide: Lipid-A-disaccharide synthase (382 aa).

Belongs to the LpxB family.

It carries out the reaction 2-N,3-O-bis[(3R)-3-hydroxytetradecanoyl]-alpha-D-glucosaminyl 1-phosphate + UDP-2-N,3-O-bis[(3R)-3-hydroxytetradecanoyl]-alpha-D-glucosamine = lipid A disaccharide (E. coli) + UDP + H(+). The enzyme catalyses a lipid X + a UDP-2-N,3-O-bis[(3R)-3-hydroxyacyl]-alpha-D-glucosamine = a lipid A disaccharide + UDP + H(+). It functions in the pathway glycolipid biosynthesis; lipid IV(A) biosynthesis; lipid IV(A) from (3R)-3-hydroxytetradecanoyl-[acyl-carrier-protein] and UDP-N-acetyl-alpha-D-glucosamine: step 5/6. Functionally, condensation of UDP-2,3-diacylglucosamine and 2,3-diacylglucosamine-1-phosphate to form lipid A disaccharide, a precursor of lipid A, a phosphorylated glycolipid that anchors the lipopolysaccharide to the outer membrane of the cell. The protein is Lipid-A-disaccharide synthase of Salmonella arizonae (strain ATCC BAA-731 / CDC346-86 / RSK2980).